A 425-amino-acid chain; its full sequence is Glutamate-1-semialdehyde 2,1-aminomutase (425 aa).

K265 is subject to N6-(pyridoxal phosphate)lysine.

Belongs to the class-III pyridoxal-phosphate-dependent aminotransferase family. HemL subfamily. Homodimer. The cofactor is pyridoxal 5'-phosphate.

The protein resides in the cytoplasm. It carries out the reaction (S)-4-amino-5-oxopentanoate = 5-aminolevulinate. It participates in porphyrin-containing compound metabolism; protoporphyrin-IX biosynthesis; 5-aminolevulinate from L-glutamyl-tRNA(Glu): step 2/2. The chain is Glutamate-1-semialdehyde 2,1-aminomutase from Chromobacterium violaceum (strain ATCC 12472 / DSM 30191 / JCM 1249 / CCUG 213 / NBRC 12614 / NCIMB 9131 / NCTC 9757 / MK).